Here is a 185-residue protein sequence, read N- to C-terminus: Intraflagellar transport protein 22 homolog (185 aa).

GTP is bound by residues 10–17, 63–67, and 123–126; these read GPCESGKT, DCGGD, and HKPG.

Belongs to the small GTPase superfamily. Rab family. As to quaternary structure, component of the IFT complex B, at least composed of IFT20, IFT22, IFT25, IFT27, IFT46, IFT52, TRAF3IP1/IFT54, IFT57, IFT74, IFT80, IFT81, and IFT88. Interacts with IFT88. Interacts with CFAP61.

Its subcellular location is the cell projection. The protein resides in the cilium. Small GTPase-like component of the intraflagellar transport (IFT) complex B. The polypeptide is Intraflagellar transport protein 22 homolog (IFT22) (Bos taurus (Bovine)).